The primary structure comprises 250 residues: ATP synthase subunit a (250 aa).

5 consecutive transmembrane segments (helical) span residues 27-47 (TDTV…AFYL), 86-106 (FVLP…WLAV), 129-149 (INYV…AGIW), 191-211 (IFAG…IMWA), and 219-239 (FDLF…ILYF).

The protein belongs to the ATPase A chain family. F-type ATPases have 2 components, CF(1) - the catalytic core - and CF(0) - the membrane proton channel. CF(1) has five subunits: alpha(3), beta(3), gamma(1), delta(1), epsilon(1). CF(0) has three main subunits: a(1), b(2) and c(9-12). The alpha and beta chains form an alternating ring which encloses part of the gamma chain. CF(1) is attached to CF(0) by a central stalk formed by the gamma and epsilon chains, while a peripheral stalk is formed by the delta and b chains.

The protein localises to the cell membrane. Its function is as follows. Key component of the proton channel; it plays a direct role in the translocation of protons across the membrane. The protein is ATP synthase subunit a of Mycobacterium bovis (strain ATCC BAA-935 / AF2122/97).